We begin with the raw amino-acid sequence, 409 residues long: Elongation factor Tu, chloroplastic (409 aa).

Residues 10–214 enclose the tr-type G domain; sequence KPHINIGTIG…QVDSYIPTPT (205 aa). The segment at 19–26 is G1; sequence GHVDHGKT. 19-26 contacts GTP; the sequence is GHVDHGKT. Residue Thr26 coordinates Mg(2+). At Lys57 the chain carries N6-methyllysine. Residues 60-64 are G2; sequence GITIN. Residues 81–84 form a G3 region; sequence DCPG. Residues 81–85 and 136–139 each bind GTP; these read DCPGH and NKED. The interval 136-139 is G4; sequence NKED. Residues 174 to 176 are G5; it reads SAL.

It belongs to the TRAFAC class translation factor GTPase superfamily. Classic translation factor GTPase family. EF-Tu/EF-1A subfamily.

It localises to the plastid. Its subcellular location is the chloroplast. It catalyses the reaction GTP + H2O = GDP + phosphate + H(+). Its function is as follows. GTP hydrolase that promotes the GTP-dependent binding of aminoacyl-tRNA to the A-site of ribosomes during protein biosynthesis. This is Elongation factor Tu, chloroplastic (tufA) from Euglena gracilis.